A 298-amino-acid polypeptide reads, in one-letter code: MTRLRIDLAYNGAAFHGWAAQPGCRTVQGTVEEALRRITRMPDAGSLRLTVAGRTDAGVHATHQVCHVDVPDQTLGQCVGHMNLTPVQALQTRLSRMMPDDIAIHGISVAPAGFDARFSALERTYVYRIADARVPWDPRLKDFAWRTDRELDIAQMNAAAALTLGLHDFGSFAIANPGGTTIREVKTAYWQRVPTRPLLGPGMGERYHTPAVESGLLCFTIVADAFARNMVRSLVGACVQVGMGKRDVDWFAGKMRVPLREGSTGPIAPQGLTLEHIAYPADDELAARAERIRAKRTL.

Residue Asp56 is the Nucleophile of the active site. Substrate is bound at residue Tyr125.

It belongs to the tRNA pseudouridine synthase TruA family. As to quaternary structure, homodimer.

The catalysed reaction is uridine(38/39/40) in tRNA = pseudouridine(38/39/40) in tRNA. Formation of pseudouridine at positions 38, 39 and 40 in the anticodon stem and loop of transfer RNAs. The polypeptide is tRNA pseudouridine synthase A (Bifidobacterium animalis subsp. lactis (strain AD011)).